Here is a 183-residue protein sequence, read N- to C-terminus: Putative 3-methyladenine DNA glycosylase (183 aa).

The protein belongs to the DNA glycosylase MPG family.

The sequence is that of Putative 3-methyladenine DNA glycosylase from Rickettsia rickettsii (strain Iowa).